Here is a 2055-residue protein sequence, read N- to C-terminus: Protein PHOTOPERIOD-INDEPENDENT EARLY FLOWERING 1 (2055 aa).

Positions 1–47 are disordered; that stretch reads MASKGGKSKPDIVMASKSGKSKPDNESRAKRQKTLEAPKEPRRPKTH. Basic and acidic residues predominate over residues 21–47; the sequence is SKPDNESRAKRQKTLEAPKEPRRPKTH. Positions 29 to 36 match the Nuclear localization signal 1 motif; it reads AKRQKTLE. The 73-residue stretch at 35–107 folds into the HSA domain; the sequence is LEAPKEPRRP…EEQRLRKVAL (73 aa). 2 coiled-coil regions span residues 78-147 and 229-250; these read LRAS…LEFL and EEDE…LQNE. 2 disordered regions span residues 183 to 332 and 340 to 359; these read KSDE…SNDS and ETHS…KSRK. Over residues 208–230 the composition is skewed to acidic residues; that stretch reads ELDEDYDLKSEDETEDDEDTIEE. 2 stretches are compositionally biased toward basic and acidic residues: residues 231 to 243 and 267 to 276; these read DEKH…RQEE and VSRETSPVKD. The stretch at 392–416 forms a coiled coil; sequence EEELAKADNEDHVEEIALLQKESEM. The segment at 432–461 is disordered; sequence KDISEDESESSFAVSEDSIVDSDENRQQAD. Residues 548–713 form the Helicase ATP-binding domain; sequence VTMYEKKLNG…WSLMHFLMPH (166 aa). 561-568 lines the ATP pocket; sequence DEMGLGKT. The DEAH box motif lies at 664-667; that stretch reads DEAH. The region spanning 1076–1229 is the Helicase C-terminal domain; that stretch reads KLQELAMLLR…NLVIQNGEYN (154 aa). The interval 1293 to 1313 is disordered; sequence EEAVDNQEFTEEPVERPEDDE. A coiled-coil region spans residues 1419 to 1492; sequence FEEKEWELDH…EREAAEVAEM (74 aa). 2 consecutive short sequence motifs (nuclear localization signal) follow at residues 1506–1513 and 1570–1577; these read KKKKKAKK and KKRDLIVD. Positions 1577–1597 are disordered; it reads DTDEEKTSKKKAKKHKKSLPN. A compositionally biased stretch (basic residues) spans 1584-1594; it reads SKKKAKKHKKS. A Myb-like domain is found at 1673–1727; sequence SWLPQEDAILCAMVHEYGPNWNFVSGTLYGMTAGGAYRGRYRHPAYCCERYRELI. 2 disordered regions span residues 1843–1864 and 1951–1977; these read ALQD…LQET and KSRT…STKS. Polar residues predominate over residues 1844–1864; it reads LQDSGPSQPDNTISRSRLQET. Residues 2006–2029 adopt a coiled-coil conformation; sequence GDREEEEEQEVDEKANSAEIEMIS.

This sequence belongs to the SNF2/RAD54 helicase family. SWR1 subfamily. Component of the SWR1 chromatin-remodeling complex composed of at least ARP6/ESD1/SUF3, PIE1, SWC6, SWC2 and H2AZs (HTA8, HTA9, HTA11). Interacts (via c-terminus) with SWC6 and ARP6 and (via N-terminus) with H2AZs. As to expression, expressed in ovules, but not in stamens.

Its subcellular location is the nucleus. The enzyme catalyses ATP + H2O = ADP + phosphate + H(+). Its function is as follows. Component of the SWR1 complex which mediates the ATP-dependent exchange of histone H2A for the H2A variant H2A.F/Z leading to transcriptional regulation of selected genes (e.g. FLC) by chromatin remodeling. Probable DNA-dependent ATPase. Not involved in the repression of FLC in gametophytes, but required for the reactivation of FLC in early embryos and for the maintenance of full activation of FLC in late embryos. The protein is Protein PHOTOPERIOD-INDEPENDENT EARLY FLOWERING 1 (PIE1) of Arabidopsis thaliana (Mouse-ear cress).